Consider the following 541-residue polypeptide: Light-independent protochlorophyllide reductase subunit B (541 aa).

Asp-36 is a [4Fe-4S] cluster binding site. Asp-286 functions as the Proton donor in the catalytic mechanism. 421–422 (GM) provides a ligand contact to substrate.

The protein belongs to the ChlB/BchB/BchZ family. In terms of assembly, protochlorophyllide reductase is composed of three subunits; BchL, BchN and BchB. Forms a heterotetramer of two BchB and two BchN subunits. [4Fe-4S] cluster is required as a cofactor.

The enzyme catalyses chlorophyllide a + oxidized 2[4Fe-4S]-[ferredoxin] + 2 ADP + 2 phosphate = protochlorophyllide a + reduced 2[4Fe-4S]-[ferredoxin] + 2 ATP + 2 H2O. It participates in porphyrin-containing compound metabolism; bacteriochlorophyll biosynthesis (light-independent). In terms of biological role, component of the dark-operative protochlorophyllide reductase (DPOR) that uses Mg-ATP and reduced ferredoxin to reduce ring D of protochlorophyllide (Pchlide) to form chlorophyllide a (Chlide). This reaction is light-independent. The NB-protein (BchN-BchB) is the catalytic component of the complex. In Chloroflexus aurantiacus (strain ATCC 29364 / DSM 637 / Y-400-fl), this protein is Light-independent protochlorophyllide reductase subunit B.